The sequence spans 802 residues: Endoplasmin (802 aa).

The signal sequence occupies residues 1–21; sequence MRALWVLGLCCVLLTFGSARA. An SRT pseudosubstrate motif motif is present at residues 42–44; that stretch reads SRT. Residue Asn62 is glycosylated (N-linked (GlcNAc...) asparagine). Ser64 is subject to Phosphoserine. Asn107 carries an N-linked (GlcNAc...) asparagine glycan. 3 residues coordinate ATP: Asn107, Asp149, and Asn162. Lys168 carries the N6-(2-hydroxyisobutyryl)lysine modification. Ser172 bears the Phosphoserine mark. Phe199 lines the ATP pocket. N-linked (GlcNAc...) asparagine glycosylation is present at Asn217. The interval 288–323 is disordered; it reads TVEEPAEEEEAAKEEKEEADDEAAVEEEEEEKKPKT. Acidic residues predominate over residues 289–317; sequence VEEPAEEEEAAKEEKEEADDEAAVEEEEE. Phosphoserine is present on Ser403. Lys404 bears the N6-succinyllysine mark. Asn445 carries N-linked (GlcNAc...) asparagine glycosylation. Ser447 is subject to Phosphoserine. Lys479 is subject to N6-acetyllysine. N-linked (GlcNAc...) asparagine glycans are attached at residues Asn481 and Asn502. Position 633 is an N6-succinyllysine (Lys633). Residues 750–802 form a disordered region; the sequence is DPDAKVEEEPEEEPEDTTEDTEQDEEEEMDAGTDEEEQEQEPEKKSTAEKDEL. Over residues 757-789 the composition is skewed to acidic residues; that stretch reads EEPEEEPEDTTEDTEQDEEEEMDAGTDEEEQEQ. Position 782 is a phosphothreonine (Thr782). A compositionally biased stretch (basic and acidic residues) spans 790-802; sequence EPEKKSTAEKDEL. Positions 799–802 match the Prevents secretion from ER motif; sequence KDEL.

The protein belongs to the heat shock protein 90 family. In terms of assembly, homodimer; disulfide-linked. Component of an EIF2 complex at least composed of CELF1/CUGBP1, CALR, CALR3, EIF2S1, EIF2S2, HSP90B1 and HSPA5. Part of a large chaperone multiprotein complex comprising DNAJB11, HSP90B1, HSPA5, HYOU, PDIA2, PDIA4, PDIA6, PPIB, SDF2L1, UGGT1 and very small amounts of ERP29, but not, or at very low levels, CALR nor CANX. Interacts with AIMP1; regulates its retention in the endoplasmic reticulum. Hyperglycosylated form interacts with OS9; promoting its degradation by the endoplasmic reticulum associated degradation (ERAD). Interacts with CNPY3. This interaction is disrupted in the presence of ATP. Interacts with TLR4 and TLR9, but not with TLR3. Interacts with MZB1 in a calcium-dependent manner. Interacts with METTL23. Interacts with IL1B; the interaction facilitates cargo translocation into the ERGIC. Interacts with EIF2AK3. Phosphorylated by CK2. In terms of processing, N-glycosylated cotranslationally at Asn-217 by STT3A-containing OST-A complex: this glycosylation is constitutive. In response to various stress, 5 additional facultative sites (Asn-62, Asn-107, Asn-445, Asn-481 and Asn-502) can be glycosylated post-translationally by STT3B-containing OST-B complex, leading to a hyperglycosylated form that is degraded by the ER-associated degradation (ERAD) pathway. In normal conditions, the OST-A complex together with CCDC134 prevent glycosylation at facultative sites during protein folding, thereby preventing hyperglycosylation. Mechanistically, nascent HSP90B1 is tethered during translation to a specialized CCDC134-containing translocon that forms a microenvironment for its folding, in which STT3A associates with the SRT pseudosubstrate motif, and prevents access to facultative glycosylation sites until folding is completed, rendering its facultative sites inaccessible to the OST-B complex.

The protein resides in the endoplasmic reticulum lumen. It is found in the sarcoplasmic reticulum lumen. Its subcellular location is the melanosome. It catalyses the reaction ATP + H2O = ADP + phosphate + H(+). In terms of biological role, ATP-dependent chaperone involved in the processing of proteins in the endoplasmic reticulum, regulating their transport. Together with MESD, acts as a modulator of the Wnt pathway by promoting the folding of LRP6, a coreceptor of the canonical Wnt pathway. When associated with CNPY3, required for proper folding of Toll-like receptors. Promotes folding and trafficking of TLR4 to the cell surface. May participate in the unfolding of cytosolic leaderless cargos (lacking the secretion signal sequence) such as the interleukin 1/IL-1 to facilitate their translocation into the ERGIC (endoplasmic reticulum-Golgi intermediate compartment) and secretion; the translocation process is mediated by the cargo receptor TMED10. The sequence is that of Endoplasmin (HSP90B1) from Oryctolagus cuniculus (Rabbit).